Reading from the N-terminus, the 410-residue chain is Arginine deiminase (410 aa).

The active-site Amidino-cysteine intermediate is Cys400.

It belongs to the arginine deiminase family.

The protein localises to the cytoplasm. The enzyme catalyses L-arginine + H2O = L-citrulline + NH4(+). It participates in amino-acid degradation; L-arginine degradation via ADI pathway; carbamoyl phosphate from L-arginine: step 1/2. The sequence is that of Arginine deiminase from Bacillus cytotoxicus (strain DSM 22905 / CIP 110041 / 391-98 / NVH 391-98).